Consider the following 102-residue polypeptide: Large ribosomal subunit protein uL24 (102 aa).

Residues Met-1–Val-22 are disordered.

The protein belongs to the universal ribosomal protein uL24 family. Part of the 50S ribosomal subunit.

Functionally, one of two assembly initiator proteins, it binds directly to the 5'-end of the 23S rRNA, where it nucleates assembly of the 50S subunit. Its function is as follows. One of the proteins that surrounds the polypeptide exit tunnel on the outside of the subunit. This Exiguobacterium sp. (strain ATCC BAA-1283 / AT1b) protein is Large ribosomal subunit protein uL24.